Here is a 523-residue protein sequence, read N- to C-terminus: Ribonuclease Y (523 aa).

Residues 28–48 (TYYIVATIIIAVIAVYVDYYI) form a helical membrane-spanning segment. The region spanning 227–312 (TVYVVNLPND…EMVEKAKKEV (86 aa)) is the KH domain. Residues 353–446 (VLKHSIEVSY…VQAADAISAA (94 aa)) enclose the HD domain.

This sequence belongs to the RNase Y family.

It is found in the cell membrane. In terms of biological role, endoribonuclease that initiates mRNA decay. The protein is Ribonuclease Y of Clostridium tetani (strain Massachusetts / E88).